The chain runs to 317 residues: Large ribosomal subunit protein uL10 (317 aa).

Low complexity predominate over residues 280–290; that stretch reads SASAAPAAGGA. The segment at 280-317 is disordered; that stretch reads SASAAPAAGGATEKKEEAKKPESESEEEDDDMGFGLFD. The span at 291 to 302 shows a compositional bias: basic and acidic residues; that stretch reads TEKKEEAKKPES. Position 302 is a phosphoserine (Ser302). The residue at position 304 (Ser304) is a Phosphoserine; by CK1.

It belongs to the universal ribosomal protein uL10 family. P0 forms a pentameric complex by interaction with dimers of P1 and P2.

It localises to the cytoplasm. Its subcellular location is the nucleus. Ribosomal protein P0 is the functional equivalent of E.coli protein L10. The protein is Large ribosomal subunit protein uL10 (RpLP0) of Drosophila melanogaster (Fruit fly).